The primary structure comprises 98 residues: Putative septation protein SpoVG (98 aa).

It belongs to the SpoVG family.

Functionally, could be involved in septation. This Alkaliphilus metalliredigens (strain QYMF) protein is Putative septation protein SpoVG.